Reading from the N-terminus, the 397-residue chain is S-adenosylmethionine synthase (397 aa).

His-15 provides a ligand contact to ATP. Asp-17 contacts Mg(2+). Glu-43 serves as a coordination point for K(+). 2 residues coordinate L-methionine: Glu-56 and Gln-99. The tract at residues Gln-99 to Lys-109 is flexible loop. Residues Asp-175–Lys-177, Arg-241–Phe-242, Asp-250, Arg-256–Lys-257, Ala-273, and Lys-277 each bind ATP. Asp-250 lines the L-methionine pocket. An L-methionine-binding site is contributed by Lys-281.

It belongs to the AdoMet synthase family. Homotetramer; dimer of dimers. Mg(2+) is required as a cofactor. The cofactor is K(+).

Its subcellular location is the cytoplasm. It carries out the reaction L-methionine + ATP + H2O = S-adenosyl-L-methionine + phosphate + diphosphate. The protein operates within amino-acid biosynthesis; S-adenosyl-L-methionine biosynthesis; S-adenosyl-L-methionine from L-methionine: step 1/1. Functionally, catalyzes the formation of S-adenosylmethionine (AdoMet) from methionine and ATP. The overall synthetic reaction is composed of two sequential steps, AdoMet formation and the subsequent tripolyphosphate hydrolysis which occurs prior to release of AdoMet from the enzyme. This Acetivibrio thermocellus (strain ATCC 27405 / DSM 1237 / JCM 9322 / NBRC 103400 / NCIMB 10682 / NRRL B-4536 / VPI 7372) (Clostridium thermocellum) protein is S-adenosylmethionine synthase.